The following is a 465-amino-acid chain: 23S rRNA (uracil(1939)-C(5))-methyltransferase RlmD (465 aa).

The disordered stretch occupies residues 1-22 (MSEAVPTSARKSKNAPVAPGPA). Residues 16–80 (PVAPGPAPVL…PSYEQATVVD (65 aa)) enclose the TRAM domain. Residues Cys93, Cys99, Cys102, and Cys181 each contribute to the [4Fe-4S] cluster site. Residues Gln289, Phe318, Asn323, Glu339, Asn367, and Asp388 each coordinate S-adenosyl-L-methionine. The active-site Nucleophile is Cys421.

The protein belongs to the class I-like SAM-binding methyltransferase superfamily. RNA M5U methyltransferase family. RlmD subfamily.

The catalysed reaction is uridine(1939) in 23S rRNA + S-adenosyl-L-methionine = 5-methyluridine(1939) in 23S rRNA + S-adenosyl-L-homocysteine + H(+). In terms of biological role, catalyzes the formation of 5-methyl-uridine at position 1939 (m5U1939) in 23S rRNA. The polypeptide is 23S rRNA (uracil(1939)-C(5))-methyltransferase RlmD (Burkholderia cenocepacia (strain HI2424)).